A 120-amino-acid chain; its full sequence is Large ribosomal subunit protein bL12 (120 aa).

The protein belongs to the bacterial ribosomal protein bL12 family. As to quaternary structure, homodimer. Part of the ribosomal stalk of the 50S ribosomal subunit. Forms a multimeric L10(L12)X complex, where L10 forms an elongated spine to which 2 to 4 L12 dimers bind in a sequential fashion. Binds GTP-bound translation factors.

Functionally, forms part of the ribosomal stalk which helps the ribosome interact with GTP-bound translation factors. Is thus essential for accurate translation. The sequence is that of Large ribosomal subunit protein bL12 from Clostridium botulinum (strain Alaska E43 / Type E3).